Consider the following 24-residue polypeptide: Potassium channel toxin alpha-KTx 6 OcyKTx5 (24 aa).

The cysteines at positions 3 and 24 are disulfide-linked.

The protein belongs to the short scorpion toxin superfamily. Potassium channel inhibitor family. Alpha-KTx 06 subfamily. As to expression, expressed by the venom gland.

It is found in the secreted. Its function is as follows. Blocks voltage-gated potassium channels. In Opisthacanthus cayaporum (South American scorpion), this protein is Potassium channel toxin alpha-KTx 6 OcyKTx5.